The sequence spans 298 residues: ATP phosphoribosyltransferase (298 aa).

Belongs to the ATP phosphoribosyltransferase family. Long subfamily. Mg(2+) is required as a cofactor.

The protein localises to the cytoplasm. The enzyme catalyses 1-(5-phospho-beta-D-ribosyl)-ATP + diphosphate = 5-phospho-alpha-D-ribose 1-diphosphate + ATP. The protein operates within amino-acid biosynthesis; L-histidine biosynthesis; L-histidine from 5-phospho-alpha-D-ribose 1-diphosphate: step 1/9. With respect to regulation, feedback inhibited by histidine. Functionally, catalyzes the condensation of ATP and 5-phosphoribose 1-diphosphate to form N'-(5'-phosphoribosyl)-ATP (PR-ATP). Has a crucial role in the pathway because the rate of histidine biosynthesis seems to be controlled primarily by regulation of HisG enzymatic activity. In Vibrio parahaemolyticus serotype O3:K6 (strain RIMD 2210633), this protein is ATP phosphoribosyltransferase.